The primary structure comprises 108 residues: Parvalbumin alpha (108 aa).

Residue Ala1 is modified to N-acetylalanine. EF-hand domains lie at 37–72 (MSAN…FAAD) and 76–108 (LTDA…VHEA). Positions 50, 52, 54, 56, 58, 61, 89, 91, 93, 95, and 100 each coordinate Ca(2+).

The protein belongs to the parvalbumin family.

Its function is as follows. In muscle, parvalbumin is thought to be involved in relaxation after contraction. It binds two calcium ions. The sequence is that of Parvalbumin alpha from Esox lucius (Northern pike).